A 646-amino-acid polypeptide reads, in one-letter code: Probable lysosomal cobalamin transporter (646 aa).

Transmembrane regions (helical) follow at residues 11 to 31, 42 to 62, 102 to 122, 149 to 169, and 193 to 213; these read LIWVAYGVAVALVLLVSVITT, IAVSIVSIISLTALLATVFLL, TLYTLDALLCLIVIPFTYFWF, LGFVFLVVILFLIGFFVPAAG, and ALTFGVGLLITLGTLLYILYT. Asparagine 297 carries N-linked (GlcNAc...) asparagine glycosylation. 2 helical membrane-spanning segments follow: residues 317–337 and 380–400; these read LLGGIFLLLLAILIWVSMLIT and ILMALLVLLFFSSSITGLATI. 2 disordered regions span residues 459–588 and 603–623; these read QPAA…PPRR and VGRARGVKLNGGAATENDKKE. Composition is skewed to low complexity over residues 460 to 490 and 517 to 543; these read PAAATRASSPTAASTATWCAPAPRPSASPAA and PSTSGPSSSSSPSSSSSSSPASSRTPR. Asparagine 545 carries an N-linked (GlcNAc...) asparagine glycan. Low complexity predominate over residues 565 to 582; the sequence is APAAALARPGAISPAAPR. Asparagine 626 is a glycosylation site (N-linked (GlcNAc...) asparagine).

The protein belongs to the LIMR family. LMBRD1 subfamily.

The protein localises to the lysosome membrane. Functionally, probable lysosomal cobalamin transporter. Required to export cobalamin from lysosomes allowing its conversion to cofactors. The protein is Probable lysosomal cobalamin transporter of Chaetomium globosum (strain ATCC 6205 / CBS 148.51 / DSM 1962 / NBRC 6347 / NRRL 1970) (Soil fungus).